Reading from the N-terminus, the 452-residue chain is Packaging protein 1 (452 aa).

The tract at residues 1 to 78 (MLPCRSTGRR…AKPPQRGSLL (78 aa)) is disordered. ATP is bound at residue 173–180 (GPTGCGKS). Positions 442–452 (RAYHVRKNKYQ) are DNA-binding.

This sequence belongs to the adenoviridae packaging protein 1 family. In terms of assembly, homodimer. Part of a genome packaging complex composed of packaging proteins 1, 2 and 3; this complex specifically binds to the packaging sequence on the left end of viral genomic DNA and performs packaging of the viral genome. Interacts with protein 33K.

It localises to the virion. It is found in the host nucleus. The protein resides in the host nucleoplasm. Its subcellular location is the host nucleolus. Functionally, component of the packaging machinery which encapsidates the viral DNA into preformed capsids and transcriptional activator of the viral major late promoter (MLP). Binds, along with packaging proteins 2 and 3, to the specific packaging sequence on the left end of viral genomic DNA and displays ATPase activity thereby providing the power stroke of the packaging machinery. The activity of packaging protein IVa2 is stimulated by protein 33K which acts as a terminase. May be the protein that pumps DNA into the capsid powered by ATP hydrolysis. Specifically binds to the 5'-CG-3' nucleotides of the repeats making up the packaging sequence. Component of the DEF-A and DEF-B transcription factors that bind downstream elements of the major late promoter (MLP), and stimulate transcription from the MLP after initiation of viral DNA replication. DEF-A is a heterodimer packaging proteins 1 and 2 and DEF-B is a homodimer of packaging protein 1. The polypeptide is Packaging protein 1 (Homo sapiens (Human)).